Consider the following 121-residue polypeptide: Small ribosomal subunit protein uS13 (121 aa).

The segment at 91–121 is disordered; that stretch reads HRRGLPVRGQKTKNNARTRKGPVKTVANKKK.

The protein belongs to the universal ribosomal protein uS13 family. In terms of assembly, part of the 30S ribosomal subunit. Forms a loose heterodimer with protein S19. Forms two bridges to the 50S subunit in the 70S ribosome.

In terms of biological role, located at the top of the head of the 30S subunit, it contacts several helices of the 16S rRNA. In the 70S ribosome it contacts the 23S rRNA (bridge B1a) and protein L5 of the 50S subunit (bridge B1b), connecting the 2 subunits; these bridges are implicated in subunit movement. Contacts the tRNAs in the A and P-sites. This is Small ribosomal subunit protein uS13 from Staphylococcus carnosus (strain TM300).